Consider the following 107-residue polypeptide: N(4)-acetylcytidine amidohydrolase (107 aa).

The ASCH domain occupies 9 to 105 (TFFEFLTPLI…KLFVIEYELI (97 aa)). Lys23 functions as the Proton acceptor in the catalytic mechanism. Thr26 functions as the Nucleophile in the catalytic mechanism. Glu76 (proton donor) is an active-site residue.

Belongs to the N(4)-acetylcytidine amidohydrolase family.

The enzyme catalyses N(4)-acetylcytidine + H2O = cytidine + acetate + H(+). The catalysed reaction is N(4)-acetyl-2'-deoxycytidine + H2O = 2'-deoxycytidine + acetate + H(+). It carries out the reaction N(4)-acetylcytosine + H2O = cytosine + acetate + H(+). In terms of biological role, catalyzes the hydrolysis of N(4)-acetylcytidine (ac4C). This is N(4)-acetylcytidine amidohydrolase from Vibrio parahaemolyticus serotype O3:K6 (strain RIMD 2210633).